A 200-amino-acid chain; its full sequence is Ubiquitin-conjugating enzyme E2 K (200 aa).

An N-acetylalanine modification is found at alanine 2. The 151-residue stretch at 4-154 (IAVQRIKREF…ARLWAHVYAG (151 aa)) folds into the UBC core domain. The residue at position 14 (lysine 14) is an N6-acetyllysine; alternate. Lysine 14 is covalently cross-linked (Glycyl lysine isopeptide (Lys-Gly) (interchain with G-Cter in SUMO); alternate). Lysine 14 participates in a covalent cross-link: Glycyl lysine isopeptide (Lys-Gly) (interchain with G-Cter in SUMO1); alternate. Cysteine 92 serves as the catalytic Glycyl thioester intermediate. Residue serine 159 is modified to Phosphoserine. Residues 160 to 200 (PEYTKKIENLCAMGFDRNAVIVALSSKSWDVETATELLLSN) enclose the UBA domain.

This sequence belongs to the ubiquitin-conjugating enzyme family. As to quaternary structure, interacts with RNF138/NARF. Interacts with BRCA1. Post-translationally, sumoylation at Lys-14 impairs catalytic activity.

It localises to the cytoplasm. The catalysed reaction is S-ubiquitinyl-[E1 ubiquitin-activating enzyme]-L-cysteine + [E2 ubiquitin-conjugating enzyme]-L-cysteine = [E1 ubiquitin-activating enzyme]-L-cysteine + S-ubiquitinyl-[E2 ubiquitin-conjugating enzyme]-L-cysteine.. Its pathway is protein modification; protein ubiquitination. Accepts ubiquitin from the E1 complex and catalyzes its covalent attachment to other proteins. In vitro, in the presence or in the absence of BRCA1-BARD1 E3 ubiquitin-protein ligase complex, catalyzes the synthesis of 'Lys-48'-linked polyubiquitin chains. Does not transfer ubiquitin directly to but elongates monoubiquitinated substrate protein. Mediates the selective degradation of short-lived and abnormal proteins, such as the endoplasmic reticulum-associated degradation (ERAD) of misfolded lumenal proteins. Ubiquitinates huntingtin. May mediate foam cell formation by the suppression of apoptosis of lipid-bearing macrophages through ubiquitination and subsequence degradation of p53/TP53. Proposed to be involved in ubiquitination and proteolytic processing of NF-kappa-B; in vitro supports ubiquitination of NFKB1. In Bos taurus (Bovine), this protein is Ubiquitin-conjugating enzyme E2 K (UBE2K).